A 479-amino-acid polypeptide reads, in one-letter code: Aspartyl/glutamyl-tRNA(Asn/Gln) amidotransferase subunit B (479 aa).

Belongs to the GatB/GatE family. GatB subfamily. As to quaternary structure, heterotrimer of A, B and C subunits.

The catalysed reaction is L-glutamyl-tRNA(Gln) + L-glutamine + ATP + H2O = L-glutaminyl-tRNA(Gln) + L-glutamate + ADP + phosphate + H(+). It carries out the reaction L-aspartyl-tRNA(Asn) + L-glutamine + ATP + H2O = L-asparaginyl-tRNA(Asn) + L-glutamate + ADP + phosphate + 2 H(+). Functionally, allows the formation of correctly charged Asn-tRNA(Asn) or Gln-tRNA(Gln) through the transamidation of misacylated Asp-tRNA(Asn) or Glu-tRNA(Gln) in organisms which lack either or both of asparaginyl-tRNA or glutaminyl-tRNA synthetases. The reaction takes place in the presence of glutamine and ATP through an activated phospho-Asp-tRNA(Asn) or phospho-Glu-tRNA(Gln). The sequence is that of Aspartyl/glutamyl-tRNA(Asn/Gln) amidotransferase subunit B from Streptococcus mutans serotype c (strain ATCC 700610 / UA159).